The primary structure comprises 274 residues: Proteasome subunit beta (274 aa).

A propeptide spans 1-52 (removed in mature form; by autocatalysis); sequence MADPMGGAGRLPAVFMTPGTSSFTDFLSQSAPHLLPGARGGLPGPVTEVAHG. Threonine 53 acts as the Nucleophile in catalysis.

Belongs to the peptidase T1B family. As to quaternary structure, the 20S proteasome core is composed of 14 alpha and 14 beta subunits that assemble into four stacked heptameric rings, resulting in a barrel-shaped structure. The two inner rings, each composed of seven catalytic beta subunits, are sandwiched by two outer rings, each composed of seven alpha subunits. The catalytic chamber with the active sites is on the inside of the barrel. Has a gated structure, the ends of the cylinder being occluded by the N-termini of the alpha-subunits. Is capped by the proteasome-associated ATPase, ARC.

The protein localises to the cytoplasm. It carries out the reaction Cleavage of peptide bonds with very broad specificity.. Its pathway is protein degradation; proteasomal Pup-dependent pathway. With respect to regulation, the formation of the proteasomal ATPase ARC-20S proteasome complex, likely via the docking of the C-termini of ARC into the intersubunit pockets in the alpha-rings, may trigger opening of the gate for substrate entry. Interconversion between the open-gate and close-gate conformations leads to a dynamic regulation of the 20S proteasome proteolysis activity. In terms of biological role, component of the proteasome core, a large protease complex with broad specificity involved in protein degradation. This Frankia alni (strain DSM 45986 / CECT 9034 / ACN14a) protein is Proteasome subunit beta.